Reading from the N-terminus, the 181-residue chain is Large ribosomal subunit protein uL5 (181 aa).

The protein belongs to the universal ribosomal protein uL5 family. Part of the 50S ribosomal subunit; part of the 5S rRNA/L5/L18/L25 subcomplex. Contacts the 5S rRNA and the P site tRNA. Forms a bridge to the 30S subunit in the 70S ribosome.

Functionally, this is one of the proteins that bind and probably mediate the attachment of the 5S RNA into the large ribosomal subunit, where it forms part of the central protuberance. In the 70S ribosome it contacts protein S13 of the 30S subunit (bridge B1b), connecting the 2 subunits; this bridge is implicated in subunit movement. Contacts the P site tRNA; the 5S rRNA and some of its associated proteins might help stabilize positioning of ribosome-bound tRNAs. The polypeptide is Large ribosomal subunit protein uL5 (Aster yellows witches'-broom phytoplasma (strain AYWB)).